A 336-amino-acid chain; its full sequence is DNA-directed RNA polymerase subunit alpha (336 aa).

An alpha N-terminal domain (alpha-NTD) region spans residues 1 to 234 (MIEFVIPKKL…NHFKIVTEGL (234 aa)). Residues 269–336 (VYNRKIDELE…KFGLELRKGE (68 aa)) are alpha C-terminal domain (alpha-CTD).

It belongs to the RNA polymerase alpha chain family. In terms of assembly, homodimer. The RNAP catalytic core consists of 2 alpha, 1 beta, 1 beta' and 1 omega subunit. When a sigma factor is associated with the core the holoenzyme is formed, which can initiate transcription.

It carries out the reaction RNA(n) + a ribonucleoside 5'-triphosphate = RNA(n+1) + diphosphate. DNA-dependent RNA polymerase catalyzes the transcription of DNA into RNA using the four ribonucleoside triphosphates as substrates. The polypeptide is DNA-directed RNA polymerase subunit alpha (Thermotoga petrophila (strain ATCC BAA-488 / DSM 13995 / JCM 10881 / RKU-1)).